Consider the following 529-residue polypeptide: Bifunctional purine biosynthesis protein PurH (529 aa).

The region spanning 1–148 is the MGS-like domain; the sequence is MQQRRPVRRA…KNHKDVAIVV (148 aa). Lys287 is subject to N6-acetyllysine.

It belongs to the PurH family.

It catalyses the reaction (6R)-10-formyltetrahydrofolate + 5-amino-1-(5-phospho-beta-D-ribosyl)imidazole-4-carboxamide = 5-formamido-1-(5-phospho-D-ribosyl)imidazole-4-carboxamide + (6S)-5,6,7,8-tetrahydrofolate. The catalysed reaction is IMP + H2O = 5-formamido-1-(5-phospho-D-ribosyl)imidazole-4-carboxamide. It functions in the pathway purine metabolism; IMP biosynthesis via de novo pathway; 5-formamido-1-(5-phospho-D-ribosyl)imidazole-4-carboxamide from 5-amino-1-(5-phospho-D-ribosyl)imidazole-4-carboxamide (10-formyl THF route): step 1/1. The protein operates within purine metabolism; IMP biosynthesis via de novo pathway; IMP from 5-formamido-1-(5-phospho-D-ribosyl)imidazole-4-carboxamide: step 1/1. In Escherichia coli (strain 55989 / EAEC), this protein is Bifunctional purine biosynthesis protein PurH.